Here is an 80-residue protein sequence, read N- to C-terminus: RNA-binding protein KhpA (80 aa).

The region spanning 33–80 is the KH domain; the sequence is LEILQLRVASEDVGKVIGKHGRIARALRTLLSASAHASQTRYALEIID.

The protein belongs to the KhpA RNA-binding protein family. In terms of assembly, forms a complex with KhpB.

Its subcellular location is the cytoplasm. A probable RNA chaperone. Forms a complex with KhpB which binds to cellular RNA and controls its expression. Plays a role in peptidoglycan (PG) homeostasis and cell length regulation. This is RNA-binding protein KhpA from Treponema pallidum (strain Nichols).